The following is a 708-amino-acid chain: Quinohemoprotein alcohol dehydrogenase (708 aa).

The signal sequence occupies residues 1-31 (MERLIDNSHGWPGRMVWLLAACLGSAAAFAQ). Glu-101 contributes to the pyrroloquinoline quinone binding site. A disulfide bond links Cys-147 and Cys-148. Pyrroloquinoline quinone contacts are provided by residues Arg-153, Thr-198, and 214-215 (GA). Position 216 (Glu-216) interacts with Ca(2+). Position 274 (Thr-274) interacts with pyrroloquinoline quinone. Ca(2+) is bound by residues Asn-294 and Asp-339. The Proton acceptor role is filled by Asp-339. Pyrroloquinoline quinone-binding positions include Lys-366, 425–426 (NW), and Val-575. The region spanning 619 to 708 (YDPAKVEAGT…GTADAIRPKP (90 aa)) is the Cytochrome c domain. Cys-635, Cys-638, His-639, and Met-678 together coordinate heme c.

Belongs to the bacterial PQQ dehydrogenase family. As to quaternary structure, monomer. Requires pyrroloquinoline quinone as cofactor. It depends on Ca(2+) as a cofactor. Heme c is required as a cofactor. In the crystallographic structures Trp-543 is oxidized to 2'-hydroxytryptophan.

The protein resides in the periplasm. It carries out the reaction 2 oxidized [azurin] + a primary alcohol = 2 reduced [azurin] + an aldehyde + 2 H(+). Catalyzes the dye-linked oxidation of primary alcohols to the corresponding aldehydes and the (subsequent) oxidation of the aldehydes to carboxylic acids. Methanol is not a substrate. This Comamonas testosteroni (Pseudomonas testosteroni) protein is Quinohemoprotein alcohol dehydrogenase.